We begin with the raw amino-acid sequence, 196 residues long: Phosphoheptose isomerase (196 aa).

One can recognise an SIS domain in the interval 36-196 (MAQALQAEGK…LIDQHLFGGA (161 aa)). A substrate-binding site is contributed by 51 to 53 (NGG). Zn(2+) contacts are provided by His-60 and Glu-64. Substrate is bound by residues Glu-64, 93 to 94 (ND), 119 to 121 (STS), Ser-124, and Gln-174. Residues Gln-174 and His-182 each contribute to the Zn(2+) site.

This sequence belongs to the SIS family. GmhA subfamily. As to quaternary structure, homotetramer. Zn(2+) serves as cofactor.

It localises to the cytoplasm. The catalysed reaction is 2 D-sedoheptulose 7-phosphate = D-glycero-alpha-D-manno-heptose 7-phosphate + D-glycero-beta-D-manno-heptose 7-phosphate. Its pathway is carbohydrate biosynthesis; D-glycero-D-manno-heptose 7-phosphate biosynthesis; D-glycero-alpha-D-manno-heptose 7-phosphate and D-glycero-beta-D-manno-heptose 7-phosphate from sedoheptulose 7-phosphate: step 1/1. Its function is as follows. Catalyzes the isomerization of sedoheptulose 7-phosphate in D-glycero-D-manno-heptose 7-phosphate. The polypeptide is Phosphoheptose isomerase (Alkalilimnicola ehrlichii (strain ATCC BAA-1101 / DSM 17681 / MLHE-1)).